The following is a 142-amino-acid chain: Large ribosomal subunit protein uL11 (142 aa).

This sequence belongs to the universal ribosomal protein uL11 family. Part of the ribosomal stalk of the 50S ribosomal subunit. Interacts with L10 and the large rRNA to form the base of the stalk. L10 forms an elongated spine to which L12 dimers bind in a sequential fashion forming a multimeric L10(L12)X complex. Post-translationally, one or more lysine residues are methylated.

Its function is as follows. Forms part of the ribosomal stalk which helps the ribosome interact with GTP-bound translation factors. This is Large ribosomal subunit protein uL11 from Thermobifida fusca (strain YX).